The primary structure comprises 1165 residues: Linoleate diol synthase (1165 aa).

Residues 104 to 448 (TDGLINDLWD…DGAFDDTELV (345 aa)) form a fatty acid alpha-dioxygenase region. His203 serves as a coordination point for heme b. Asp204, Ser219, Tyr221, Asp223, and Ser225 together coordinate Ca(2+). Tyr376 is a catalytic residue. Heme b is bound at residue His379. The epoxy alcohol synthase stretch occupies residues 666–1161 (EVLSNQKDYK…ATTMKINWEG (496 aa)). Position 1080 (Cys1080) interacts with heme. The interval 1114-1134 (RSYPASQWPGQAGRPPRDPAW) is disordered.

It belongs to the peroxidase family. As to quaternary structure, homotetramer. Heme b is required as a cofactor. It depends on Ca(2+) as a cofactor. Heme serves as cofactor. Post-translationally, the N-terminus is blocked.

The catalysed reaction is (9Z,12Z)-octadecadienoate + O2 = (8R,9Z,12Z)-8-hydroperoxyoctadeca-9,12-dienoate. It carries out the reaction (8R,9Z,12Z)-8-hydroperoxyoctadeca-9,12-dienoate = (7S,8S,9Z,12Z)-7,8-dihydroxyoctadeca-9,12-dienoate. In terms of biological role, 7,8-linoleate diol synthase is a bifunctional enzyme that converts linoleic acid (18:2n-6) into 8-hydroperoxy-8(E),12(Z)-octadecadienoic acid (8-HPODE) and then catalyzes the isomerization of the resulting hydroperoxide to 7,8-dihydroxy-9(Z),12(Z)-octadecadienoic acid (7,8-DiHODE). The chain is Linoleate diol synthase from Gaeumannomyces graminis (Turf grass take-all root rot fungus).